Reading from the N-terminus, the 509-residue chain is Bestrophin-2a (509 aa).

The Cytoplasmic portion of the chain corresponds to 1–31 (MTVTYTARVANARFGGFSQLLLLWRGSIYKL). Ala-10 is a Ca(2+) binding site. The chain crosses the membrane as a helical span at residues 32-51 (LWRELLCFLGFYMALSAAYR). At 52-60 (FVLTEGQKR) the chain is on the extracellular side. The chain crosses the membrane as a helical span at residues 61 to 82 (YFEKLVIYCDQYASLIPVSFVL). Over 83-238 (GFYVTLVVNR…WISVPLVYTQ (156 aa)) the chain is Cytoplasmic. The chain crosses the membrane as a helical span at residues 239–255 (VVTIALYSYFLACLIGR). Residues 256–274 (QFLDPAQGYKDHDLDLCVP) are Extracellular-facing. Residues 275–288 (IFTLLQFFFYAGWL) traverse the membrane as a helical segment. At 289–509 (KVAEQLINPF…PIGEEEENLA (221 aa)) the chain is on the cytoplasmic side. Ca(2+) contacts are provided by Gln-293, Asn-296, Asp-301, and Asp-304. Residues 454 to 509 (DPGLPEPEAPPPAGPEPLTLIPGPVEPFSIVTMPGPRGPAPPWLPSPIGEEEENLA) are disordered. Composition is skewed to pro residues over residues 457 to 468 (LPEPEAPPPAGP) and 489 to 498 (PRGPAPPWLP).

Belongs to the anion channel-forming bestrophin (TC 1.A.46) family. Calcium-sensitive chloride channel subfamily. As to quaternary structure, pentamer. Interacts with GLUL; this interaction tethers a fraction of GLUL to the membrane, causing a decrease of cytosolic glutamine synthase (GS) activity and inhibits the chloride channel activity of BEST2 by affecting the gating at the aperture in the absence of intracellular glutamate. Mainly confined to the retinal pigment epithelium. Expressed in colon.

The protein resides in the cell membrane. The protein localises to the basolateral cell membrane. The catalysed reaction is chloride(in) = chloride(out). It catalyses the reaction hydrogencarbonate(in) = hydrogencarbonate(out). The enzyme catalyses L-glutamate(out) = L-glutamate(in). It carries out the reaction iodide(out) = iodide(in). The catalysed reaction is L-glutamine(out) = L-glutamine(in). Its activity is regulated as follows. Chloride channel activity is allosterically inhibited by GLUL/glutamine synthase (GS) which affects the gating at the aperture in the absence of intracellular glutamate. Inhibitory effect of GLUL is relieved upon increasing of L-glutamate intracellular level. Its function is as follows. Ligand-gated anion channel that allows the movement of anions across cell membranes when activated by calcium (Ca2+). Transports a large specter of anions, namely mediates the movement of chloride, L-glutamate and iodide. Calcium-binding triggers the dilation of the aperture, but calcium-dependent gating is only effective when the size of the passing anion is bigger than the closed aperture. Mediates the calcium-activated hydrogencarbonate movement and participates in colonic hydrogencarbonate secretion concomitant with mucin secretion. In non-pigmented epithelium (NPE), mediates the efflux of intracellular L-glutamate; binding of intracellular L-glutamate activates and open both the neck and the aperture of the channel, leading to L-glutamate exit promoting chloride influx movement from the extracellular side in trans. Also exhibits a directional permeability for intracellular glutamine, in a similar manner as for L-glutamate. In Homo sapiens (Human), this protein is Bestrophin-2a.